We begin with the raw amino-acid sequence, 376 residues long: Erythronate-4-phosphate dehydrogenase (376 aa).

Substrate contacts are provided by serine 45 and threonine 67. NAD(+) is bound by residues 127–128 (QV), aspartate 147, and threonine 176. The active site involves arginine 209. Aspartate 233 lines the NAD(+) pocket. Glutamate 238 is an active-site residue. Histidine 255 (proton donor) is an active-site residue. Glycine 258 contacts NAD(+). Residue tyrosine 259 participates in substrate binding.

Belongs to the D-isomer specific 2-hydroxyacid dehydrogenase family. PdxB subfamily. As to quaternary structure, homodimer.

It is found in the cytoplasm. It carries out the reaction 4-phospho-D-erythronate + NAD(+) = (R)-3-hydroxy-2-oxo-4-phosphooxybutanoate + NADH + H(+). The protein operates within cofactor biosynthesis; pyridoxine 5'-phosphate biosynthesis; pyridoxine 5'-phosphate from D-erythrose 4-phosphate: step 2/5. Catalyzes the oxidation of erythronate-4-phosphate to 3-hydroxy-2-oxo-4-phosphonooxybutanoate. This Aliivibrio salmonicida (strain LFI1238) (Vibrio salmonicida (strain LFI1238)) protein is Erythronate-4-phosphate dehydrogenase.